The following is a 587-amino-acid chain: Vesicular glutamate transporter 2.2 (587 aa).

Residues 1 to 71 are Cytoplasmic-facing; sequence MDTVKERVLA…CTCFGLPRRY (71 aa). The chain crosses the membrane as a helical span at residues 72–92; sequence IIAIMSGLGFCISFGIRCNLG. Residues 93 to 125 lie on the Vesicular side of the membrane; the sequence is VAIVDMVNNSTIHKGGKIIIKGKAKFNWDPETV. Asn-100 and Asn-101 each carry an N-linked (GlcNAc...) asparagine glycan. Residues 126–146 traverse the membrane as a helical segment; that stretch reads GMIHGSFFWGYTVTQIPGGYI. At 147 to 149 the chain is on the cytoplasmic side; that stretch reads SSR. Residues 150–170 form a helical membrane-spanning segment; that stretch reads LAANRVFGAAILLTSTLNMFI. The Vesicular portion of the chain corresponds to 171 to 180; sequence PSAARVHYGC. A helical membrane pass occupies residues 181-203; the sequence is VMFVRILQGLVEGVTYPACHGIW. At 204 to 217 the chain is on the cytoplasmic side; it reads SKWAPPLERSRLAT. A helical transmembrane segment spans residues 218–238; the sequence is TSFCGSYAGAVVAMPLAGILV. Residues 239 to 245 are Vesicular-facing; it reads QYSGWSS. A helical membrane pass occupies residues 246–266; sequence VFYIYGSFGIVWYMFWILVSY. The Cytoplasmic segment spans residues 267-311; the sequence is ESPADHPTITDEERTYIEESIGESAKLLGAMEKYKTPWRKFFTSM. Residues 312–332 form a helical membrane-spanning segment; sequence PVYAIIVANFCRSWTFYLLLI. Residues 333–350 are Vesicular-facing; that stretch reads SQPAYFEEVFGFEISKVG. Residues 351–371 form a helical membrane-spanning segment; that stretch reads MVSALPHLVMTIIVPIGGQLA. Over 372-387 the chain is Cytoplasmic; the sequence is DYLRSKNILTTTTVRK. Residues 388–408 traverse the membrane as a helical segment; the sequence is IMNCGGFGMEATLLLVVGFSH. At 409–410 the chain is on the vesicular side; it reads SK. A helical membrane pass occupies residues 411–431; sequence GVAISFLVLAVGFSGFAISGF. Residues 432 to 444 lie on the Cytoplasmic side of the membrane; that stretch reads NVNHLDIAPRYAS. Residues 445–465 traverse the membrane as a helical segment; sequence ILMGISNGVGTLSGMVCPLIV. Residues 466 to 479 lie on the Vesicular side of the membrane; the sequence is GAMTKNKTREEWQN. N-linked (GlcNAc...) asparagine glycosylation occurs at Asn-471. A helical transmembrane segment spans residues 480 to 500; sequence VFLIASLVHYGGVIFYGIFAS. Residues 501-587 lie on the Cytoplasmic side of the membrane; the sequence is GEKQPWADPE…ERTYTGDGYS (87 aa).

It belongs to the major facilitator superfamily. Sodium/anion cotransporter family. VGLUT subfamily. As to expression, expressed in spinal cord.

It localises to the cytoplasmic vesicle. Its subcellular location is the secretory vesicle. The protein resides in the synaptic vesicle membrane. The protein localises to the membrane. It is found in the synapse. It localises to the synaptosome. Its subcellular location is the cell membrane. The enzyme catalyses L-glutamate(out) = L-glutamate(in). The catalysed reaction is 3 Na(+)(out) + phosphate(out) = 3 Na(+)(in) + phosphate(in). It catalyses the reaction phosphate(in) = phosphate(out). It carries out the reaction K(+)(in) + H(+)(out) = K(+)(out) + H(+)(in). The enzyme catalyses chloride(in) = chloride(out). With respect to regulation, chloride channel activity is allosterically activated by lumenal H(+) and Cl(-) leading to synaptic vesicles acidification. The L-glutamate transport activity is allosterically activated by lumenal H(+) and Cl(-). The allosteric requirement for H(+) efficiently prevents non-vesicular efflux across the plasma membrane. The L-glutamate uniporter activity exhibits a biphasic dependence on chloride concentration. Multifunctional transporter that transports L-glutamate as well as multiple ions such as chloride, proton, potassium, sodium and phosphate. At the synaptic vesicle membrane, mainly functions as a uniporter which transports preferentially L-glutamate but also, phosphate from the cytoplasm into synaptic vesicles at presynaptic nerve terminals of excitatory neural cells. The L-glutamate or phosphate uniporter activity is electrogenic and is driven by the proton electrochemical gradient, mainly by the electrical gradient established by the vacuolar H(+)-ATPase across the synaptic vesicle membrane. In addition, functions as a chloride channel that allows a chloride permeation through the synaptic vesicle membrane therefore affects the proton electrochemical gradient and promotes synaptic vesicles acidification. Moreover, functions as a vesicular K(+)/H(+) antiport allowing to maintain the electrical gradient and to decrease chemical gradient and therefore sustain vesicular L-glutamate uptake. The vesicular H(+)/H(+) antiport activity is electroneutral. At the plasma membrane, following exocytosis, functions as a symporter of Na(+) and phosphate from the extracellular space to the cytoplasm allowing synaptic phosphate homeostasis regulation. The symporter activity is driven by an inside negative membrane potential and is electrogenic. Also involved in the regulation of retinal hyaloid vessel regression during postnatal development. May also play a role in the endocrine L-glutamatergic system of other tissues such as pineal gland and pancreas. In Danio rerio (Zebrafish), this protein is Vesicular glutamate transporter 2.2 (slc17a6a).